Consider the following 503-residue polypeptide: Glutamate--tRNA ligase (503 aa).

The short motif at 15–25 (PSPTGYLHVGG) is the 'HIGH' region element. A 'KMSKS' region motif is present at residues 262-266 (KLSKR). Residue lysine 265 coordinates ATP.

It belongs to the class-I aminoacyl-tRNA synthetase family. Glutamate--tRNA ligase type 1 subfamily. In terms of assembly, monomer.

It is found in the cytoplasm. It carries out the reaction tRNA(Glu) + L-glutamate + ATP = L-glutamyl-tRNA(Glu) + AMP + diphosphate. Catalyzes the attachment of glutamate to tRNA(Glu) in a two-step reaction: glutamate is first activated by ATP to form Glu-AMP and then transferred to the acceptor end of tRNA(Glu). The protein is Glutamate--tRNA ligase of Prosthecochloris aestuarii (strain DSM 271 / SK 413).